The primary structure comprises 168 residues: 2-oxo-4-hydroxy-4-carboxy-5-ureidoimidazoline decarboxylase (168 aa).

H70 serves as the catalytic Proton donor; for OHCU decarboxylase activity. The segment covering H70–M79 has biased composition (basic and acidic residues). The segment at H70 to D93 is disordered. Residues P71, S83–Q87, and F118–V122 contribute to the substrate site.

It belongs to the OHCU decarboxylase family.

It catalyses the reaction 5-hydroxy-2-oxo-4-ureido-2,5-dihydro-1H-imidazole-5-carboxylate + H(+) = (S)-allantoin + CO2. It functions in the pathway purine metabolism; urate degradation; (S)-allantoin from urate: step 3/3. Its function is as follows. Catalyzes the stereoselective decarboxylation of 2-oxo-4-hydroxy-4-carboxy-5-ureidoimidazoline (OHCU) to (S)-allantoin. The protein is 2-oxo-4-hydroxy-4-carboxy-5-ureidoimidazoline decarboxylase of Haloferax volcanii (strain ATCC 29605 / DSM 3757 / JCM 8879 / NBRC 14742 / NCIMB 2012 / VKM B-1768 / DS2) (Halobacterium volcanii).